Consider the following 155-residue polypeptide: MSRRSTAEKETAKSDPIYRNRFINMLVNRILKHGKKSLAYRILYRAMKKIQQKTGKNPLSVSRQAIRGVTPDVTVKARRVGGSTYQVPIEIRSTQGKALAIRWLLGASRKRPGRNMAFKLSYELMDAARENGNAIRKKEETHRMAEAXRAFAHFR.

This sequence belongs to the universal ribosomal protein uS7 family. Part of the 30S ribosomal subunit.

Its subcellular location is the plastid. It is found in the chloroplast. In terms of biological role, one of the primary rRNA binding proteins, it binds directly to 16S rRNA where it nucleates assembly of the head domain of the 30S subunit. The protein is Small ribosomal subunit protein uS7c (rps7) of Ginkgo biloba (Ginkgo).